Consider the following 63-residue polypeptide: Large ribosomal subunit protein uL30 (63 aa).

This sequence belongs to the universal ribosomal protein uL30 family. In terms of assembly, part of the 50S ribosomal subunit.

This chain is Large ribosomal subunit protein uL30, found in Stenotrophomonas maltophilia (strain K279a).